The sequence spans 347 residues: GMP reductase (347 aa).

Alanine 108 to alanine 131 contributes to the NADP(+) binding site. K(+) contacts are provided by glycine 181 and glycine 183. The active-site Thioimidate intermediate is the cysteine 186. Residue isoleucine 216–valine 239 participates in NADP(+) binding.

It belongs to the IMPDH/GMPR family. GuaC type 1 subfamily. Homotetramer.

It catalyses the reaction IMP + NH4(+) + NADP(+) = GMP + NADPH + 2 H(+). In terms of biological role, catalyzes the irreversible NADPH-dependent deamination of GMP to IMP. It functions in the conversion of nucleobase, nucleoside and nucleotide derivatives of G to A nucleotides, and in maintaining the intracellular balance of A and G nucleotides. The chain is GMP reductase from Shigella dysenteriae serotype 1 (strain Sd197).